The following is a 231-amino-acid chain: 5'-methylthioadenosine/S-adenosylhomocysteine nucleosidase (231 aa).

Catalysis depends on Glu-12, which acts as the Proton acceptor. Substrate-binding positions include Gly-78, Met-153, and 174 to 175; that span reads ME. The Proton donor role is filled by Asp-198.

This sequence belongs to the PNP/UDP phosphorylase family. MtnN subfamily.

It catalyses the reaction S-adenosyl-L-homocysteine + H2O = S-(5-deoxy-D-ribos-5-yl)-L-homocysteine + adenine. The catalysed reaction is S-methyl-5'-thioadenosine + H2O = 5-(methylsulfanyl)-D-ribose + adenine. It carries out the reaction 5'-deoxyadenosine + H2O = 5-deoxy-D-ribose + adenine. The protein operates within amino-acid biosynthesis; L-methionine biosynthesis via salvage pathway; S-methyl-5-thio-alpha-D-ribose 1-phosphate from S-methyl-5'-thioadenosine (hydrolase route): step 1/2. In terms of biological role, catalyzes the irreversible cleavage of the glycosidic bond in both 5'-methylthioadenosine (MTA) and S-adenosylhomocysteine (SAH/AdoHcy) to adenine and the corresponding thioribose, 5'-methylthioribose and S-ribosylhomocysteine, respectively. Also cleaves 5'-deoxyadenosine, a toxic by-product of radical S-adenosylmethionine (SAM) enzymes, into 5-deoxyribose and adenine. This Bacillus cereus (strain B4264) protein is 5'-methylthioadenosine/S-adenosylhomocysteine nucleosidase.